The chain runs to 549 residues: Chaperonin GroEL 5 (549 aa).

ATP contacts are provided by residues 30 to 33 (TLGP), K51, 87 to 91 (DGTTT), G415, and D495.

This sequence belongs to the chaperonin (HSP60) family. In terms of assembly, forms a cylinder of 14 subunits composed of two heptameric rings stacked back-to-back. Interacts with the co-chaperonin GroES.

The protein resides in the cytoplasm. The enzyme catalyses ATP + H2O + a folded polypeptide = ADP + phosphate + an unfolded polypeptide.. In terms of biological role, together with its co-chaperonin GroES, plays an essential role in assisting protein folding. The GroEL-GroES system forms a nano-cage that allows encapsulation of the non-native substrate proteins and provides a physical environment optimized to promote and accelerate protein folding. The chain is Chaperonin GroEL 5 from Mesorhizobium japonicum (strain LMG 29417 / CECT 9101 / MAFF 303099) (Mesorhizobium loti (strain MAFF 303099)).